A 379-amino-acid polypeptide reads, in one-letter code: 3-dehydroquinate synthase (379 aa).

Residues 67–72 (SGEKNK), 101–105 (GVVLD), 125–126 (TT), Lys-138, and Lys-147 contribute to the NAD(+) site. Positions 180, 242, and 258 each coordinate Zn(2+).

It belongs to the sugar phosphate cyclases superfamily. Dehydroquinate synthase family. NAD(+) is required as a cofactor. The cofactor is Co(2+). It depends on Zn(2+) as a cofactor.

Its subcellular location is the cytoplasm. The enzyme catalyses 7-phospho-2-dehydro-3-deoxy-D-arabino-heptonate = 3-dehydroquinate + phosphate. It functions in the pathway metabolic intermediate biosynthesis; chorismate biosynthesis; chorismate from D-erythrose 4-phosphate and phosphoenolpyruvate: step 2/7. Functionally, catalyzes the conversion of 3-deoxy-D-arabino-heptulosonate 7-phosphate (DAHP) to dehydroquinate (DHQ). This chain is 3-dehydroquinate synthase, found in Chlamydia abortus (strain DSM 27085 / S26/3) (Chlamydophila abortus).